The primary structure comprises 498 residues: Zinc finger protein 79 (498 aa).

The disordered stretch occupies residues 1-23 (MLEEGVLPSPGPALPQEENTGEE). The KRAB domain maps to 38–109 (TFFSSVTVAF…EGEDLRSPSP (72 aa)). 11 consecutive C2H2-type zinc fingers follow at residues 193–215 (YACNECGKAFSYCSSLSQHQKSH), 221–243 (YECSECGKAFSQSSSLIQHQRIH), 249–271 (YKCSECGRAFSQNANLTKHQRTH), 277–299 (YRCSECEKAFSDCSALVQHQRIH), 305–327 (YECSDCGKAFRHSANLTNHQRTH), 333–355 (YKCSECGKAFSYCAAFIQHQRIH), 361–383 (YRCAACGKAFSQSANLTNHQRTH), 389–411 (YKCSECGKAFSQSTNLIIHQKTH), 417–439 (YKCNECGKFFSESSALIRHHIIH), 445–467 (YECNECGKAFNQSSSLSQHQRIH), and 473–495 (YECSECGKAFRCSSAFVRHQRLH).

Belongs to the krueppel C2H2-type zinc-finger protein family.

Its subcellular location is the nucleus. Its function is as follows. May be involved in transcriptional regulation. This is Zinc finger protein 79 (ZNF79) from Homo sapiens (Human).